A 229-amino-acid polypeptide reads, in one-letter code: Protein fmp52-2, mitochondrial (229 aa).

Residues 1–44 constitute a mitochondrion transit peptide; it reads MTAAAVFGCTGAVGSQILATLLASDAFSSVATVSRKLPTAESPK.

Belongs to the FMP52 family.

Its subcellular location is the mitochondrion outer membrane. The sequence is that of Protein fmp52-2, mitochondrial (fmp522) from Aspergillus terreus (strain NIH 2624 / FGSC A1156).